Consider the following 89-residue polypeptide: Small ribosomal subunit protein uS15 (89 aa).

The protein belongs to the universal ribosomal protein uS15 family. In terms of assembly, part of the 30S ribosomal subunit. Forms a bridge to the 50S subunit in the 70S ribosome, contacting the 23S rRNA.

One of the primary rRNA binding proteins, it binds directly to 16S rRNA where it helps nucleate assembly of the platform of the 30S subunit by binding and bridging several RNA helices of the 16S rRNA. In terms of biological role, forms an intersubunit bridge (bridge B4) with the 23S rRNA of the 50S subunit in the ribosome. The protein is Small ribosomal subunit protein uS15 of Nitratidesulfovibrio vulgaris (strain DP4) (Desulfovibrio vulgaris).